The following is a 168-amino-acid chain: UPF0262 protein BRADO6636 (168 aa).

This sequence belongs to the UPF0262 family.

This is UPF0262 protein BRADO6636 from Bradyrhizobium sp. (strain ORS 278).